We begin with the raw amino-acid sequence, 119 residues long: Large ribosomal subunit protein bL20 (119 aa).

This sequence belongs to the bacterial ribosomal protein bL20 family.

Binds directly to 23S ribosomal RNA and is necessary for the in vitro assembly process of the 50S ribosomal subunit. It is not involved in the protein synthesizing functions of that subunit. In Vesicomyosocius okutanii subsp. Calyptogena okutanii (strain HA), this protein is Large ribosomal subunit protein bL20.